A 163-amino-acid chain; its full sequence is Interleukin-17F (163 aa).

Positions 1–30 are cleaved as a signal peptide; the sequence is MTVKTLHGPAMVKYLLLSILGLAFLSEAAA. An N-linked (GlcNAc...) asparagine glycan is attached at Asn-83. Disulfide bonds link Cys-102/Cys-152 and Cys-107/Cys-154.

It belongs to the IL-17 family. As to quaternary structure, homodimer; disulfide-linked. Heterodimer with IL17A (IL17A-IL17F). Forms complexes with IL17RA and IL17RC receptors with 2:1 binding stoichiometry: two receptor chains for one interleukin molecule. IL17F homodimer forms predominantly complexes with IL17RC homodimer, whereas IL17A-IL17F favors complexes with IL17RA-IL17RC. IL17RA and IL17RC chains cannot distinguish between IL17A and IL17F molecules, potentially enabling the formation of topologically distinct complexes. As to expression, expressed in T-helper 1 and T-helper 2 cells, basophils and mast cells.

Its subcellular location is the secreted. In terms of biological role, effector cytokine of innate and adaptive immune system involved in antimicrobial host defense and maintenance of tissue integrity. IL17A-IL17F signals via IL17RA-IL17RC heterodimeric receptor complex, triggering homotypic interaction of IL17RA and IL17RC chains with TRAF3IP2 adapter through SEFIR domains. This leads to downstream TRAF6-mediated activation of NF-kappa-B and MAPkinase pathways ultimately resulting in transcriptional activation of cytokines, chemokines, antimicrobial peptides and matrix metalloproteinases, with potential strong immune inflammation. IL17A-IL17F is primarily involved in host defense against extracellular bacteria and fungi by inducing neutrophilic inflammation. As signature effector cytokine of T-helper 17 cells (Th17), primarily induces neutrophil activation and recruitment at infection and inflammatory sites. Stimulates the production of antimicrobial beta-defensins DEFB1, DEFB103A, and DEFB104A by mucosal epithelial cells, limiting the entry of microbes through the epithelial barriers. IL17F homodimer can signal via IL17RC homodimeric receptor complex, triggering downstream activation of TRAF6 and NF-kappa-B signaling pathway. Via IL17RC induces transcriptional activation of IL33, a potent cytokine that stimulates group 2 innate lymphoid cells and adaptive T-helper 2 cells involved in pulmonary allergic response to fungi. Likely via IL17RC, promotes sympathetic innervation of peripheral organs by coordinating the communication between gamma-delta T cells and parenchymal cells. Stimulates sympathetic innervation of thermogenic adipose tissue by driving TGFB1 expression. Regulates the composition of intestinal microbiota and immune tolerance by inducing antimicrobial proteins that specifically control the growth of commensal Firmicutes and Bacteroidetes. The chain is Interleukin-17F (IL17F) from Homo sapiens (Human).